A 494-amino-acid chain; its full sequence is Acetyl-coenzyme A carboxylase carboxyl transferase subunit beta, chloroplastic (494 aa).

In terms of domain architecture, CoA carboxyltransferase N-terminal spans 226–494 (LWVQCENCYG…VPLNQNETEH (269 aa)). Zn(2+) is bound by residues C230, C233, C249, and C252. The segment at 230–252 (CENCYGLNYKKFLKSKMNICEQC) adopts a C4-type zinc-finger fold.

The protein belongs to the AccD/PCCB family. Acetyl-CoA carboxylase is a heterohexamer composed of biotin carboxyl carrier protein, biotin carboxylase and 2 subunits each of ACCase subunit alpha and ACCase plastid-coded subunit beta (accD). Zn(2+) is required as a cofactor.

The protein resides in the plastid. Its subcellular location is the chloroplast stroma. It carries out the reaction N(6)-carboxybiotinyl-L-lysyl-[protein] + acetyl-CoA = N(6)-biotinyl-L-lysyl-[protein] + malonyl-CoA. It participates in lipid metabolism; malonyl-CoA biosynthesis; malonyl-CoA from acetyl-CoA: step 1/1. Its function is as follows. Component of the acetyl coenzyme A carboxylase (ACC) complex. Biotin carboxylase (BC) catalyzes the carboxylation of biotin on its carrier protein (BCCP) and then the CO(2) group is transferred by the transcarboxylase to acetyl-CoA to form malonyl-CoA. The polypeptide is Acetyl-coenzyme A carboxylase carboxyl transferase subunit beta, chloroplastic (Coffea arabica (Arabian coffee)).